A 490-amino-acid chain; its full sequence is Myocilin (490 aa).

The signal sequence occupies residues 1-18 (MPAVQLLLLAGLVWGAGA). The stretch at 55 to 170 (SAIQDLQRDS…QEVARLARGQ (116 aa)) forms a coiled coil. Positions 168-187 (RGQCPQARDTSQDVPAGSRE) are disordered. Residues 230-489 (GCGELVWVGQ…MVTYDIKLSK (260 aa)) form the Olfactomedin-like domain. A disulfide bridge links C231 with C419. Ca(2+) contacts are provided by D366, N414, A415, I463, and D464. The Microbody targeting signal motif lies at 488-490 (SKI).

In terms of assembly, homodimer (via N-terminus). Can also form higher oligomers. Interacts with OLFM3, FN1, NRCAM, GLDN and NFASC. Interacts (via N-terminus) with MYL2. Interacts with SFRP1, FRZB, FZD7, FZD10, FZD1 and WIF1; regulates Wnt signaling. Interacts with SNTA1; regulates muscle hypertrophy. Interacts with ERBB2 and ERBB3; activates ERBB2-ERBB3 signaling pathway. Interacts with SNCG; affects its secretion and its aggregation. Palmitoylated. Post-translationally, glycosylated. In terms of processing, undergoes a calcium-dependent proteolytic cleavage at Arg-212 by CAPN2 in the endoplasmic reticulum. The result is the production of two fragments, one of 35 kDa containing the C-terminal olfactomedin-like domain, and another of 20 kDa containing the N-terminal leucine zipper-like domain. As to expression, detected in eye aqueous humor (at protein level).

The protein localises to the secreted. It is found in the golgi apparatus. The protein resides in the cytoplasmic vesicle. Its subcellular location is the extracellular space. It localises to the extracellular matrix. The protein localises to the extracellular exosome. It is found in the mitochondrion. The protein resides in the mitochondrion intermembrane space. Its subcellular location is the mitochondrion inner membrane. It localises to the mitochondrion outer membrane. The protein localises to the rough endoplasmic reticulum. It is found in the cell projection. The protein resides in the cilium. Its subcellular location is the endoplasmic reticulum. Secreted glycoprotein regulating the activation of different signaling pathways in adjacent cells to control different processes including cell adhesion, cell-matrix adhesion, cytoskeleton organization and cell migration. Promotes substrate adhesion, spreading and formation of focal contacts. Negatively regulates cell-matrix adhesion and stress fiber assembly through Rho protein signal transduction. Modulates the organization of actin cytoskeleton by stimulating the formation of stress fibers through interactions with components of Wnt signaling pathways. Promotes cell migration through activation of PTK2 and the downstream phosphatidylinositol 3-kinase signaling. Plays a role in bone formation and promotes osteoblast differentiation in a dose-dependent manner through mitogen-activated protein kinase signaling. Mediates myelination in the peripheral nervous system through ERBB2/ERBB3 signaling. Plays a role as a regulator of muscle hypertrophy through the components of dystrophin-associated protein complex. Involved in positive regulation of mitochondrial depolarization. Plays a role in neurite outgrowth. May participate in the obstruction of fluid outflow in the trabecular meshwork. The chain is Myocilin from Oryctolagus cuniculus (Rabbit).